Reading from the N-terminus, the 260-residue chain is UPF0246 protein Mmwyl1_3597 (260 aa).

This sequence belongs to the UPF0246 family.

The sequence is that of UPF0246 protein Mmwyl1_3597 from Marinomonas sp. (strain MWYL1).